Here is a 154-residue protein sequence, read N- to C-terminus: Superoxide dismutase [Cu-Zn] (154 aa).

Cu cation is bound by residues His-47, His-49, and His-64. A disulfide bridge links Cys-58 with Cys-147. 4 residues coordinate Zn(2+): His-64, His-72, His-81, and Asp-84. His-121 serves as a coordination point for Cu cation. Substrate is bound at residue Arg-144.

It belongs to the Cu-Zn superoxide dismutase family. As to quaternary structure, homodimer. It depends on Cu cation as a cofactor. Requires Zn(2+) as cofactor.

The protein localises to the cytoplasm. The enzyme catalyses 2 superoxide + 2 H(+) = H2O2 + O2. Functionally, destroys radicals which are normally produced within the cells and which are toxic to biological systems. In Claviceps purpurea (strain 20.1) (Ergot fungus), this protein is Superoxide dismutase [Cu-Zn] (SOD1).